Here is a 952-residue protein sequence, read N- to C-terminus: Microtubule-associated protein 6 (952 aa).

The tract at residues Met1–Phe15 is calmodulin-binding. 3 S-palmitoyl cysteine lipidation sites follow: Cys5, Cys10, and Cys11. 2 disordered regions span residues Thr37–Ala457 and Ile486–Pro952. Residues Gly41–Ala55 are compositionally biased toward pro residues. The residue at position 98 (Ser98) is a Phosphoserine. The segment covering Ala105–Ser117 has biased composition (low complexity). The mn 1 stretch occupies residues Asp116–Ser139. Over residues Met119–Ser139 the composition is skewed to basic and acidic residues. The calmodulin-binding stretch occupies residues Arg124–Arg138. Tyr141 carries the phosphotyrosine modification. Residues Pro147–Trp171 show a composition bias toward basic and acidic residues. Positions Glu151–Lys174 are mn 2. The interval Ala160–Lys174 is calmodulin-binding. Residue Ser185 is modified to Phosphoserine. Residues Pro187–Arg201 are calmodulin-binding. Ser207 is subject to Phosphoserine. The span at Val221–Ala230 shows a compositional bias: low complexity. Residues Pro222–Gly267 form a Mc-1 repeat. Positions Pro222 to Gly451 are 5 X approximate tandem repeat Mc. Calmodulin-binding stretches follow at residues Thr235–Glu249, Asp280–Thr294, Arg325–Arg339, Thr373–Glu387, Arg421–His435, Arg481–Lys495, Arg532–Ser546, and Pro559–Lys573. A Mc-2 repeat occupies Pro268–Gly313. One copy of the Mc-3 repeat lies at Pro314–Gly359. One copy of the Mc-4 repeat lies at Pro360–Gly405. The stretch at Pro406 to Gly451 is one Mc-5 repeat. The segment at Ser473–Pro496 is mn 3. The span at Pro542–Lys551 shows a compositional bias: basic and acidic residues. The span at Pro552–Lys567 shows a compositional bias: low complexity. Ser590 is subject to Phosphoserine. Positions Lys595–Ser621 are enriched in basic and acidic residues. Position 681 is a phosphoserine (Ser681). Residues Lys711 to Asp725 show a composition bias toward basic and acidic residues. Ser736 carries the phosphoserine modification. Residues Ala761–Pro775 are compositionally biased toward pro residues. Composition is skewed to basic and acidic residues over residues Glu776 to Gln792 and Pro821 to Gly831. Positions Val903 to Pro915 are enriched in pro residues. Ser951 is subject to Phosphoserine.

It belongs to the STOP family. Interacts with calmodulin (via C-terminus); the interaction is dependent on Ca(2+). Interacts (via C-terminus) with TMEM106B (via N-terminus). Interacts with ZDHHC13 (via ANK repeats). Interacts with ZDHHC17 (via ANK repeats). Palmitoylated. Probably depalmitoylated by ABHD17A, ABHD17B and ABHD17C. During neuronal polarization, palmitoylation and depalmitoylation cycles regulate MAP6 shuttling between secretory vesicles and microtubules, and its polarized distribution in the axon. In terms of tissue distribution, isoform 1 is specifically expressed in adult brain. Isoform 2 is predominantly expressed in embryonic brain; expression persists at low levels in the adult brain.

Its subcellular location is the cytoplasm. It localises to the cytoskeleton. The protein localises to the golgi apparatus. It is found in the cell projection. The protein resides in the axon. Its subcellular location is the dendrite. It localises to the cytoplasmic vesicle. The protein localises to the secretory vesicle membrane. Its function is as follows. Involved in microtubule stabilization in many cell types, including neuronal cells. Specifically has microtubule cold stabilizing activity. Involved in dendrite morphogenesis and maintenance by regulating lysosomal trafficking via its interaction with TMEM106B. Regulates KIF5A-mediated axonal cargo transport. Regulates axonal growth during neuron polarization. The sequence is that of Microtubule-associated protein 6 (Map6) from Rattus norvegicus (Rat).